A 193-amino-acid chain; its full sequence is Probable nicotinate-nucleotide adenylyltransferase (193 aa).

Belongs to the NadD family.

It carries out the reaction nicotinate beta-D-ribonucleotide + ATP + H(+) = deamido-NAD(+) + diphosphate. Its pathway is cofactor biosynthesis; NAD(+) biosynthesis; deamido-NAD(+) from nicotinate D-ribonucleotide: step 1/1. Its function is as follows. Catalyzes the reversible adenylation of nicotinate mononucleotide (NaMN) to nicotinic acid adenine dinucleotide (NaAD). The polypeptide is Probable nicotinate-nucleotide adenylyltransferase (Chlorobium phaeovibrioides (strain DSM 265 / 1930) (Prosthecochloris vibrioformis (strain DSM 265))).